A 397-amino-acid chain; its full sequence is Ubiquitin-like modifier-activating enzyme 5 (397 aa).

ATP is bound by residues glycine 77, aspartate 98, lysine 121, asparagine 144, and asparagine 178. Cysteine 220 and cysteine 223 together coordinate Zn(2+). Cysteine 244 functions as the Glycyl thioester intermediate in the catalytic mechanism. Zn(2+) contacts are provided by cysteine 297 and cysteine 302. Residues 329–341 (VVHEDNDWGIELV) carry the UFM1-interacting sequence (UIS) motif. Residues 342 to 372 (SEVSEEELKAASGPVPDLPEGIKVAYTIPIT) form a linker region. The short motif at 382-397 (DSEQSLDELMAQMKNL) is the UFC1-binding sequence (UFC) element.

The protein belongs to the ubiquitin-activating E1 family. UBA5 subfamily. In terms of assembly, homodimer; homodimerization is required for ufm1 activation. Interacts (via UIS motif) with ufm1; binds ufm1 via a trans-binding mechanism in which ufm1 interacts with distinct sites in both subunits of the uba5 homodimer. Interacts (via C-terminus) with ufc1.

The protein resides in the cytoplasm. It localises to the nucleus. It is found in the endoplasmic reticulum membrane. The protein localises to the golgi apparatus. E1-like enzyme which specifically catalyzes the first step in ufmylation. Activates ufm1 by first adenylating its C-terminal glycine residue with ATP, and thereafter linking this residue to the side chain of a cysteine residue in E1, yielding a ufm1-E1 thioester and free AMP. Activates ufm1 via a trans-binding mechanism, in which ufm1 interacts with distinct sites in both subunits of the uba5 homodimer. Trans-binding also promotes stabilization of the uba5 homodimer, and enhances ATP-binding. Transfer of ufm1 from uba5 to the E2-like enzyme UFC1 also takes place using a trans mechanism. Ufmylation plays a key role in various processes, such as ribosome recycling, response to DNA damage, interferon response or reticulophagy (also called ER-phagy). The sequence is that of Ubiquitin-like modifier-activating enzyme 5 from Xenopus laevis (African clawed frog).